The sequence spans 439 residues: Sorting nexin-31 (439 aa).

The region spanning 1–109 (MKMHFCIPVS…EFLTLVQLHT (109 aa)) is the PX domain. A disordered region spans residues 384–409 (TEQSPEMQIEVPEQGRSKKHPSQPSQ).

Belongs to the sorting nexin family. As to quaternary structure, interacts with CCDC22, CCDC93, VPS26C and VPS35L, associates with the retriever and CCC complexes.

Its function is as follows. May be involved in protein trafficking. In Mus musculus (Mouse), this protein is Sorting nexin-31 (Snx31).